A 283-amino-acid polypeptide reads, in one-letter code: ATP phosphoribosyltransferase (283 aa).

This sequence belongs to the ATP phosphoribosyltransferase family. Long subfamily. Requires Mg(2+) as cofactor.

It localises to the cytoplasm. It carries out the reaction 1-(5-phospho-beta-D-ribosyl)-ATP + diphosphate = 5-phospho-alpha-D-ribose 1-diphosphate + ATP. Its pathway is amino-acid biosynthesis; L-histidine biosynthesis; L-histidine from 5-phospho-alpha-D-ribose 1-diphosphate: step 1/9. Feedback inhibited by histidine. In terms of biological role, catalyzes the condensation of ATP and 5-phosphoribose 1-diphosphate to form N'-(5'-phosphoribosyl)-ATP (PR-ATP). Has a crucial role in the pathway because the rate of histidine biosynthesis seems to be controlled primarily by regulation of HisG enzymatic activity. This chain is ATP phosphoribosyltransferase, found in Rhodococcus jostii (strain RHA1).